The chain runs to 86 residues: CRISPR-associated endoribonuclease Cas2 (86 aa).

Asp-8 provides a ligand contact to Mg(2+).

Belongs to the CRISPR-associated endoribonuclease Cas2 protein family. In terms of assembly, homodimer, forms a heterotetramer with a Cas1 homodimer. Mg(2+) serves as cofactor.

In terms of biological role, CRISPR (clustered regularly interspaced short palindromic repeat), is an adaptive immune system that provides protection against mobile genetic elements (viruses, transposable elements and conjugative plasmids). CRISPR clusters contain sequences complementary to antecedent mobile elements and target invading nucleic acids. CRISPR clusters are transcribed and processed into CRISPR RNA (crRNA). Functions as a ssRNA-specific endoribonuclease. Involved in the integration of spacer DNA into the CRISPR cassette. Plasmid targeted by CRISPR locus P1 transform wild-type cells very poorly. This Haloferax volcanii (strain ATCC 29605 / DSM 3757 / JCM 8879 / NBRC 14742 / NCIMB 2012 / VKM B-1768 / DS2) (Halobacterium volcanii) protein is CRISPR-associated endoribonuclease Cas2.